A 458-amino-acid chain; its full sequence is Pyruvate kinase (458 aa).

Arg-33 lines the substrate pocket. K(+)-binding residues include Asn-35, Ser-37, and Asp-67. 35-38 (NASH) provides a ligand contact to ATP. 2 residues coordinate ATP: Arg-74 and Lys-148. Glu-214 is a Mg(2+) binding site. The substrate site is built by Gly-237, Asp-238, and Thr-270. Asp-238 serves as a coordination point for Mg(2+).

It belongs to the pyruvate kinase family. As to quaternary structure, homotetramer. A divalent metal cation serves as cofactor.

It catalyses the reaction pyruvate + ATP = phosphoenolpyruvate + ADP + H(+). The protein operates within carbohydrate degradation; glycolysis; pyruvate from D-glyceraldehyde 3-phosphate: step 5/5. Its activity is regulated as follows. Not activated by classical allosteric effectors. This chain is Pyruvate kinase (pyk), found in Aeropyrum pernix (strain ATCC 700893 / DSM 11879 / JCM 9820 / NBRC 100138 / K1).